The sequence spans 452 residues: Pup--protein ligase (452 aa).

E9 serves as a coordination point for Mg(2+). Residue R53 participates in ATP binding. Y55 is a Mg(2+) binding site. The active-site Proton acceptor is D57. E63 is a binding site for Mg(2+). ATP contacts are provided by T66 and W419.

Belongs to the Pup ligase/Pup deamidase family. Pup-conjugating enzyme subfamily.

The enzyme catalyses ATP + [prokaryotic ubiquitin-like protein]-L-glutamate + [protein]-L-lysine = ADP + phosphate + N(6)-([prokaryotic ubiquitin-like protein]-gamma-L-glutamyl)-[protein]-L-lysine.. It participates in protein degradation; proteasomal Pup-dependent pathway. Its pathway is protein modification; protein pupylation. Its function is as follows. Catalyzes the covalent attachment of the prokaryotic ubiquitin-like protein modifier Pup to the proteasomal substrate proteins, thereby targeting them for proteasomal degradation. This tagging system is termed pupylation. The ligation reaction involves the side-chain carboxylate of the C-terminal glutamate of Pup and the side-chain amino group of a substrate lysine. This is Pup--protein ligase from Frankia alni (strain DSM 45986 / CECT 9034 / ACN14a).